A 437-amino-acid polypeptide reads, in one-letter code: Peptidyl-prolyl cis-trans isomerase CYP38, chloroplastic (437 aa).

The N-terminal 36 residues, 1 to 36 (MAAAFASLPTFSVVNSSRFPRRRIGFSCSKKPLEVR), are a transit peptide targeting the chloroplast. Residues 37–92 (CSSGNTRYTKQRGAFTSLKECAISLALSVGLMVSVPSIALPPNAHAVANPVIPDVS) constitute a thylakoid transit peptide. The 193-residue stretch at 245-437 (VKIKDNPNIE…LANPSYKIAG (193 aa)) folds into the PPIase cyclophilin-type domain.

As to expression, ubiquitous. Lower levels of expression in roots.

Its subcellular location is the plastid. It is found in the chloroplast thylakoid lumen. It carries out the reaction [protein]-peptidylproline (omega=180) = [protein]-peptidylproline (omega=0). In terms of biological role, required for the assembly and stabilization of PSII, but has no PPIases activity. In Arabidopsis thaliana (Mouse-ear cress), this protein is Peptidyl-prolyl cis-trans isomerase CYP38, chloroplastic (CYP38).